A 361-amino-acid chain; its full sequence is Probable mannose-1-phosphate guanylyltransferase 1 (361 aa).

Residues Leu-6 and Val-7 each contribute to the GDP-alpha-D-mannose site. Gly-9, Gly-11, Thr-12, Arg-13, and Lys-23 together coordinate diphosphate. The GDP-alpha-D-mannose site is built by Gly-85, Asn-109, Asp-111, Gly-146, and Asn-173.

It belongs to the transferase hexapeptide repeat family.

The enzyme catalyses alpha-D-mannose 1-phosphate + GTP + H(+) = GDP-alpha-D-mannose + diphosphate. The protein operates within nucleotide-sugar biosynthesis; GDP-alpha-D-mannose biosynthesis; GDP-alpha-D-mannose from alpha-D-mannose 1-phosphate (GTP route): step 1/1. Its function is as follows. Catalyzes a reaction of the Smirnoff-Wheeler pathway, the major route to ascorbate biosynthesis in plants. This chain is Probable mannose-1-phosphate guanylyltransferase 1, found in Oryza sativa subsp. japonica (Rice).